Consider the following 689-residue polypeptide: Glycine--tRNA ligase beta subunit (689 aa).

It belongs to the class-II aminoacyl-tRNA synthetase family. As to quaternary structure, tetramer of two alpha and two beta subunits.

It localises to the cytoplasm. It catalyses the reaction tRNA(Gly) + glycine + ATP = glycyl-tRNA(Gly) + AMP + diphosphate. This Salmonella typhi protein is Glycine--tRNA ligase beta subunit.